An 858-amino-acid polypeptide reads, in one-letter code: MQRRGALFSVPGGGGKMAAGDLGELLVPHMPTIRVPRSGDRVYKNECAFSYDSPNSEGGLYVCMNTFLAFGREHVERHFRKTGQSVYMHLKRHMREKVRGASGGALPKRRNSKIFLDLDMDDDLNSDDYEYEDEAKLVIFPDHYEIALPNIEELPALVTIACDAVLSSKSPYRKQDPDTWENEVPVSKYANNLVQLDNGVRIPPSGWKCARCDLRENLWLNLTDGSVLCGKWFFDSSGGNGHALEHYRDMGYPLAVKLGTITPDGADVYSFQEEGPVSDPHLAKHLAHFGIDMLHTQGTENGLRDNDIKPRVSEWEVIQESGTKLKPMYGPGYTGLKNLGNSCYLSSVMQAIFSIPEFQRAYVGNLPRIFDYSPLDPTQDFNTQMTKLGHGLLSGQYSKPPVKSELIEQVMKEEHKPQQNGISPRMFKAFVSKSHPEFSSNRQQDAQEFFLHLVNLVERNRIGSENPSDVFRFLVEERIQCCQTRKVRYTERVDYLMQLPVAMEAATNKDELITYELMRREAEANRRPLPELVRAKIPFSACLQAFAEPDNVDDFWSSALQAKSAGVKTSRFASFPEYLVVQIKKFTFGLDWVPRKFDVSIDMPDLLDISHLRARGLQPGEEELPDISPPIVIPDDSKDRLMNQLIDPSDIDESSVMQLAEMGFPLEACRKAVYFTGNTGAEVAFNWIIVHMEEPDFAEPLAIPGYGGAGASVFGATGLDNQPPEEIVAIITSMGFQRNQAVQALQATNHNLERALDWIFSHPEFEEDSDFVIEMENNANANIVSEAKPEGPRVKDGSGMYELFAFISHMGTSTMSGHYVCHIKKEGRWVIYNDHKVCASERPPKDLGYMYFYRRIPS.

S112 is modified (phosphoserine). The UBP-type; degenerate zinc-finger motif lies at 185–293; the sequence is PVSKYANNLV…KHLAHFGIDM (109 aa). Positions 209, 212, 229, and 242 each coordinate Zn(2+). A Glycyl lysine isopeptide (Lys-Gly) (interchain with G-Cter in SUMO2) cross-link involves residue K309. The USP domain occupies 334 to 856; that stretch reads TGLKNLGNSC…LGYMYFYRRI (523 aa). C343 serves as the catalytic Nucleophile. A Glycyl lysine isopeptide (Lys-Gly) (interchain with G-Cter in SUMO2) cross-link involves residue K403. UBA domains lie at 650 to 691 and 722 to 762; these read DIDE…IIVH and QPPE…IFSH. The active-site Proton acceptor is the H818.

It belongs to the peptidase C19 family. As to quaternary structure, interacts with UFD1. Interacts (via UBA domains) with SIAH2 (when ubiquitinated). Interacts with BAG6; the interaction is direct and may mediate UBL4A deubiquitination. Interacts (via UBA 2 domain) with AMFR; the interaction is direct. Interacts with UBL4A; may be indirect via BAG6. Interacts with NEDD4.

Its subcellular location is the cytoplasm. It catalyses the reaction Thiol-dependent hydrolysis of ester, thioester, amide, peptide and isopeptide bonds formed by the C-terminal Gly of ubiquitin (a 76-residue protein attached to proteins as an intracellular targeting signal).. Specifically inhibited by spautin-1 (specific and potent autophagy inhibitor-1), a derivative of MBCQ that binds to USP13 and inhibits deubiquitinase activity. Regulated by PIK3C3/VPS34-containing complexes. The weak deubiquitinase activity in vitro suggests the existence of some mechanism that activates the enzyme. Functionally, deubiquitinase that mediates deubiquitination of target proteins such as BECN1, MITF, SKP2 and USP10 and is involved in various processes such as autophagy, endoplasmic reticulum-associated degradation (ERAD), cell cycle progression or DNA damage response. Component of a regulatory loop that controls autophagy and p53/TP53 levels: mediates deubiquitination of BECN1, a key regulator of autophagy, leading to stabilize the PIK3C3/VPS34-containing complexes. Alternatively, forms with NEDD4 a deubiquitination complex, which subsequently stabilizes VPS34 to promote autophagy. Also deubiquitinates USP10, an essential regulator of p53/TP53 stability. In turn, PIK3C3/VPS34-containing complexes regulate USP13 stability, suggesting the existence of a regulatory system by which PIK3C3/VPS34-containing complexes regulate p53/TP53 protein levels via USP10 and USP13. Recruited by nuclear UFD1 and mediates deubiquitination of SKP2, thereby regulating endoplasmic reticulum-associated degradation (ERAD). Also regulates ERAD through the deubiquitination of UBL4A a component of the BAG6/BAT3 complex. Mediates stabilization of SIAH2 independently of deubiquitinase activity: binds ubiquitinated SIAH2 and acts by impairing SIAH2 autoubiquitination. Regulates the cell cycle progression by stabilizing cell cycle proteins such as SKP2 and AURKB. In addition, plays an important role in maintaining genomic stability and in DNA replication checkpoint activation via regulation of RAP80 and TOPBP1. Deubiquitinates the multifunctional protein HMGB1 and subsequently drives its nucleocytoplasmic localization and its secretion. Positively regulates type I and type II interferon signalings by deubiquitinating STAT1 but negatively regulates antiviral response by deubiquitinating STING1. This chain is Ubiquitin carboxyl-terminal hydrolase 13 (Usp13), found in Mus musculus (Mouse).